The chain runs to 293 residues: Ribosomal protein L11 methyltransferase (293 aa).

The S-adenosyl-L-methionine site is built by Thr-146, Gly-167, Asp-189, and Asn-230.

This sequence belongs to the methyltransferase superfamily. PrmA family.

The protein resides in the cytoplasm. The catalysed reaction is L-lysyl-[protein] + 3 S-adenosyl-L-methionine = N(6),N(6),N(6)-trimethyl-L-lysyl-[protein] + 3 S-adenosyl-L-homocysteine + 3 H(+). Functionally, methylates ribosomal protein L11. In Colwellia psychrerythraea (strain 34H / ATCC BAA-681) (Vibrio psychroerythus), this protein is Ribosomal protein L11 methyltransferase.